The primary structure comprises 192 residues: MASNRCAVCKILNETCAPMCIYAPHFPSNDASFKVIIQIFGAVNVCNILDNLEFPEQREIAANCLRYAAEARIRNPISGCHDMILQYKNILNNVEQDIESAVNELGTYVGHDQVPKFYDLPMPDDFLMTPVSLDSFIAKIKSLNEVQKNQLMQLPTAADNAPMIMNSIFGKMEDKNLKDGHRADGASTSAGK.

The LOB domain occupies 4 to 105 (NRCAVCKILN…QDIESAVNEL (102 aa)).

It belongs to the LOB domain-containing protein family.

This Arabidopsis thaliana (Mouse-ear cress) protein is LOB domain-containing protein 32 (LBD32).